A 164-amino-acid polypeptide reads, in one-letter code: UPF0304 protein YfbU (164 aa).

The protein belongs to the UPF0304 family.

This is UPF0304 protein YfbU from Salmonella enteritidis PT4 (strain P125109).